The primary structure comprises 488 residues: Integrin beta-like protein 1 (488 aa).

A signal peptide spans 1–21 (MHAGAFINFVWALSLVSLLAA). Cystine bridges form between Cys38–Cys65, Cys49–Cys63, Cys57–Cys68, Cys70–Cys83, Cys85–Cys106, Cys90–Cys104, Cys98–Cys109, Cys111–Cys120, Cys126–Cys153, Cys137–Cys151, Cys145–Cys156, Cys158–Cys172, Cys174–Cys196, Cys179–Cys194, Cys188–Cys199, Cys201–Cys210, Cys214–Cys241, Cys225–Cys239, Cys233–Cys244, Cys246–Cys263, Cys265–Cys290, Cys270–Cys288, Cys282–Cys293, Cys295–Cys304, Cys310–Cys337, Cys321–Cys335, Cys329–Cys340, Cys342–Cys355, Cys357–Cys378, Cys362–Cys376, Cys370–Cys381, Cys383–Cys392, Cys398–Cys425, Cys409–Cys423, Cys417–Cys428, Cys430–Cys442, Cys444–Cys465, Cys449–Cys463, Cys457–Cys468, and Cys470–Cys479. I-EGF domains follow at residues 38 to 84 (CRLP…PLCE), 85 to 121 (CHDW…EACQ), 126 to 173 (CDLT…KYCE), 174 to 211 (CDDT…DKCE), 214 to 264 (CDIT…DTCE), 265 to 305 (CDER…RKCE), 310 to 356 (CALS…KNCE), 357 to 393 (CDDR…KLCQ), 398 to 443 (CNMT…EFCE), and 444 to 480 (CDDR…NACE). The I repeat unit spans residues 49 to 89 (CRTPDGSICSGRGSCDCGICLCEVKEAGKYYGPLCECHDWV). Positions 49 to 488 (CRTPDGSICS…CEIWLGSEYP (440 aa)) are cysteine-rich tandem repeats. The II repeat unit spans residues 90–136 (CHTYDGQVCAGHGQCDCGVCKCDVGWSGEACQYPTTCDLTRKKSNEM). Residues 137 to 178 (CKNSQAVICSNAGTCQCGRCKCENSDNSGLIYGKYCECDDTE) form an III repeat. Residues 179-224 (CFDDETQEICGGHGKCYCGNCYCEAGWHGDKCEFQCDITPWEIKKR) form an IV repeat. The stretch at 225–269 (CTSPDGKICSNRGTCVCGECTCHDVDPTGDWGDIHGDTCECDERN) is one V repeat. The VI repeat unit spans residues 270 to 320 (CKSVYDRYSDDFCSGHGQCNCGRCDCKDGWTGRKCEHPRACALSIEESKKK). A VII repeat occupies 321-361 (CQGSASQPCSGRGKCECGQCTCFPPGDSKVYGKNCECDDRQ). The VIII repeat unit spans residues 362–408 (CEDLEGKICGEHGTCSCGRCICEAGWFGKLCQHERKCNMTEEESKSQ). A glycan (N-linked (GlcNAc...) asparagine) is linked at Asn399. Residues 409–448 (CESDDGILCSGKGSCHCGKCICSPQEWYVSGEFCECDDRD) form an IX repeat. The X repeat unit spans residues 449 to 488 (CDKHDGLICTGNGICNCGNCECWEGWNGNACEIWLGSEYP).

It is found in the secreted. This chain is Integrin beta-like protein 1 (itgbl1), found in Xenopus laevis (African clawed frog).